The chain runs to 424 residues: GTPase Obg (424 aa).

The 158-residue stretch at 1–158 (MFIDTAKIFV…RWIKLELKLL (158 aa)) folds into the Obg domain. The 173-residue stretch at 159–331 (ADVGLIGFPN…LMKEAARLLS (173 aa)) folds into the OBG-type G domain. GTP is bound by residues 165–172 (GFPNVGKS), 190–194 (FTTLK), 212–215 (DIPG), 282–285 (NKSD), and 312–314 (SAA). 2 residues coordinate Mg(2+): S172 and T192. The OCT domain maps to 345–424 (RFIEEEKRFT…LNDFEFDFLL (80 aa)).

Belongs to the TRAFAC class OBG-HflX-like GTPase superfamily. OBG GTPase family. Monomer. Mg(2+) serves as cofactor.

It is found in the cytoplasm. An essential GTPase which binds GTP, GDP and possibly (p)ppGpp with moderate affinity, with high nucleotide exchange rates and a fairly low GTP hydrolysis rate. Plays a role in control of the cell cycle, stress response, ribosome biogenesis and in those bacteria that undergo differentiation, in morphogenesis control. The polypeptide is GTPase Obg (Clostridium botulinum (strain ATCC 19397 / Type A)).